Here is an 84-residue protein sequence, read N- to C-terminus: Delta-conotoxin-like Bt6.4 (84 aa).

A signal peptide spans 1–22 (MKLTCMVIVAVLFLTAWTSVMA). Positions 23 to 57 (DGSINRPDIAEGWQKFFSKARDEMKNRAASELNKR) are excised as a propeptide. Cystine bridges form between C58–C74, C65–C78, and C73–C82.

This sequence belongs to the conotoxin O1 superfamily. In terms of tissue distribution, expressed by the venom duct.

It localises to the secreted. Functionally, this toxin activates voltage-gated sodium channels. It shifts the voltage-dependence of activation to more hyperpolarized potentials but has only little effect on channel inactivation. It is active on Nav1.3/SCN3A (EC(50)=3.98 nM), Nav1.4/SCN4A (EC(50)=4.99 nM), Nav1.6/SCN8A (EC(50)=1.27 nM) and Nav1.7/SCN9A (EC(50)=2.42 nM) voltage-gated sodium channels. In vivo, it induces nocifensive or pain-like behaviors in mice when injected intraplantarly. This Conus betulinus (Beech cone) protein is Delta-conotoxin-like Bt6.4.